Consider the following 137-residue polypeptide: MPTINQLVRKPRQSKVVKSKSPALNVGYNSHKKVQTNVSSPQKRGVATRVGTMTPKKPNSALRKFARVRLSNLIEVTAYIPGIGHNLQEHSVVLIRGGRVKDLPGVRYHIVRGALDTAGVADRKQSRSKYGAKRPKG.

The tract at residues 33 to 57 (KVQTNVSSPQKRGVATRVGTMTPKK) is disordered. Asp102 is subject to 3-methylthioaspartic acid.

Belongs to the universal ribosomal protein uS12 family. As to quaternary structure, part of the 30S ribosomal subunit. Contacts proteins S8 and S17. May interact with IF1 in the 30S initiation complex.

In terms of biological role, with S4 and S5 plays an important role in translational accuracy. Functionally, interacts with and stabilizes bases of the 16S rRNA that are involved in tRNA selection in the A site and with the mRNA backbone. Located at the interface of the 30S and 50S subunits, it traverses the body of the 30S subunit contacting proteins on the other side and probably holding the rRNA structure together. The combined cluster of proteins S8, S12 and S17 appears to hold together the shoulder and platform of the 30S subunit. The sequence is that of Small ribosomal subunit protein uS12 from Streptococcus thermophilus (strain CNRZ 1066).